Consider the following 283-residue polypeptide: Alpha-ketoglutarate-dependent taurine dioxygenase (283 aa).

Positions 70, 73, and 95 each coordinate taurine. Positions 99 and 101 each coordinate Fe cation. A taurine-binding site is contributed by Val-102. Thr-126 is a 2-oxoglutarate binding site. Residues Trp-128, Trp-240, and Trp-248 each carry the 3-hydroxytryptophan; by autocatalysis modification. His-255 serves as a coordination point for Fe cation. 2-oxoglutarate is bound by residues His-255, Arg-266, and Arg-270. Residue Arg-270 participates in taurine binding.

It belongs to the TfdA dioxygenase family. As to quaternary structure, homodimer. Was later shown to be a homotetramer arranged as a dimer of two dimers. Requires Fe(2+) as cofactor.

It carries out the reaction taurine + 2-oxoglutarate + O2 = aminoacetaldehyde + sulfite + succinate + CO2 + H(+). The protein operates within organosulfur degradation; taurine degradation via aerobic pathway; aminoacetaldehyde and sulfite from taurine: step 1/1. With respect to regulation, activated by ascorbate and inhibited by divalent metal ions such as zinc, copper and cobalt. Catalyzes the alpha-ketoglutarate-dependent hydroxylation of taurine yielding sulfite and aminoacetaldehyde after decomposition of an unstable intermediate. Is required for the utilization of taurine (2-aminoethanesulfonate) as an alternative sulfur source for growth in the absence of sulfate. To a lesser extent, pentanesulfonate, 3-(N-morpholino)propanesulfonate and 1,3-dioxo-2-isoindolineethanesulfonate are also desulfonated by this enzyme in vitro; however, desulfonation by TauD of organosulfonates other than taurine seem to be of little or no importance for sulfur metabolism in vivo. This chain is Alpha-ketoglutarate-dependent taurine dioxygenase (tauD), found in Escherichia coli (strain K12).